Here is a 168-residue protein sequence, read N- to C-terminus: DNA-binding protein inhibitor ID-1 (168 aa).

The bHLH domain maps to 46–98 (LPALLDEQQVNVLLYDMNGCYSRLKELVPTLPQNRKVSKVEILQHVIDYIRDL). The interval 53–106 (QQVNVLLYDMNGCYSRLKELVPTLPQNRKVSKVEILQHVIDYIRDLQLELNSES) is interaction with IFI204. The Nuclear export signal signature appears at 91–104 (VIDYIRDLQLELNS).

In terms of assembly, heterodimer with other HLH proteins. Interacts with CLOCK and BMAL1. Interacts with COPS5, IFI204, GATA4 and NKX2-5. Polyubiquitinated; which is favored by Ifi204 and leads to proteasomal degradation.

The protein localises to the cytoplasm. Its subcellular location is the nucleus. Functionally, transcriptional regulator (lacking a basic DNA binding domain) which negatively regulates the basic helix-loop-helix (bHLH) transcription factors by forming heterodimers and inhibiting their DNA binding and transcriptional activity. Implicated in regulating a variety of cellular processes, including cellular growth, senescence, differentiation, apoptosis, angiogenesis, and neoplastic transformation. Inhibits skeletal muscle and cardiac myocyte differentiation. Regulates the circadian clock by repressing the transcriptional activator activity of the CLOCK-BMAL1 heterodimer. The polypeptide is DNA-binding protein inhibitor ID-1 (Id1) (Mus musculus (Mouse)).